The following is an 89-amino-acid chain: Small ribosomal subunit protein uS15 (89 aa).

This sequence belongs to the universal ribosomal protein uS15 family. Part of the 30S ribosomal subunit. Forms a bridge to the 50S subunit in the 70S ribosome, contacting the 23S rRNA.

One of the primary rRNA binding proteins, it binds directly to 16S rRNA where it helps nucleate assembly of the platform of the 30S subunit by binding and bridging several RNA helices of the 16S rRNA. In terms of biological role, forms an intersubunit bridge (bridge B4) with the 23S rRNA of the 50S subunit in the ribosome. In Rhodospirillum centenum (strain ATCC 51521 / SW), this protein is Small ribosomal subunit protein uS15.